Consider the following 585-residue polypeptide: Probable multidrug resistance ABC transporter ATP-binding/permease protein YheI (585 aa).

The ABC transmembrane type-1 domain maps to 19–304 (YTIAIVLLLA…IGELINVMQR (286 aa)). Helical transmembrane passes span 21-41 (IAIV…KLLG), 57-77 (LLFY…MSYF), 127-147 (AVSL…MFMM), 149-169 (IFLT…IIPL), 249-269 (VKLL…FLVF), and 279-299 (VSFN…GELI). Positions 337-572 (IVFSHVSFTY…NGWYREQYER (236 aa)) constitute an ABC transporter domain. Residue 371–378 (GKTGSGKT) participates in ATP binding.

This sequence belongs to the ABC transporter superfamily. Heterodimer composed of YheH and YheI.

It is found in the cell membrane. With respect to regulation, inhibited by ortho-vanadate. In terms of biological role, involved in the transport of four structurally unrelated drugs, including doxorubicin and mitoxantrone. Transmembrane domains (TMD) form a pore in the membrane and the ATP-binding domain (NBD) is responsible for energy generation. The protein is Probable multidrug resistance ABC transporter ATP-binding/permease protein YheI (yheI) of Bacillus subtilis (strain 168).